The following is a 250-amino-acid chain: MAWQVSLLELEDWLQCPICLEVFKESLMLQCGHSYCKGCLVSLSYHLDTKVRCPMCWQVVDGSSSLPNVSLAWVIEALRLPGDPEPKVCVHHRNPLSLFCEKDQELICGLCGLLGSHQHHPVTPVSTVCSRMKEELAALFSELKQEQKKVDELIAKLVKNRTRIVNESDVFSWVIRREFQELRHPVDEEKARCLEGIGGHTRGLVASLDMQLEQAQGTRERLAQAECVLEQFGNEDHHEFIWKFHSMASR.

The segment at 16–57 adopts an RING-type zinc-finger fold; it reads CPICLEVFKESLMLQCGHSYCKGCLVSLSYHLDTKVRCPMCW. The B box-type zinc finger occupies 84–125; sequence PEPKVCVHHRNPLSLFCEKDQELICGLCGLLGSHQHHPVTPV. Zn(2+)-binding residues include Cys-89, His-92, Cys-111, and His-117. Coiled coils occupy residues 125-169 and 204-235; these read VSTV…NESD and LVAS…FGNE.

It belongs to the TRIM/RBCC family.

This Homo sapiens (Human) protein is Tripartite motif-containing protein 74 (TRIM74).